The chain runs to 420 residues: MTTSPELVTGKAFPNVVVTGIAMTTALATDAETTWKLLLDNQSGIRMLDDPFIEEFNLPVRIGGHLLEEFDHQLTRVELRRMGYLQRMSTVLSRRLWENAGSPEVDTNRLMVSIGTGLGSAEELVFSYDDMRARGMKAVSPLAVQKYMPNGAAAAVGLEHHAKAGVMTPVSACASGSEAIAHAWQQIVLGEADSAICGGVETKIEAVPIAGFSQMRIVMSTKNDNPAGACRPFDRDRDGFVFGEAGALMLIETEDSAKARSANILARIMGASITSDGFHMVAPDPNGERAGHAIARAVHLAGLSPSDIDHVNAHATGTQVGDLAEAKAINKALCNNRPAVYAPKSALGHSVGAVGAVESILTVLALRDQVIPPTLNLVNLDPDIDLDVVAGKPRPGDYRYAVNNSFGFGGHNVAIAFGCY.

In terms of domain architecture, Ketosynthase family 3 (KS3) spans 13–419 (FPNVVVTGIA…GHNVAIAFGC (407 aa)). Catalysis depends on for beta-ketoacyl synthase activity residues Cys-173, His-314, and His-349.

This sequence belongs to the thiolase-like superfamily. Beta-ketoacyl-ACP synthases family.

The protein localises to the cytoplasm. The enzyme catalyses an ultra-long-chain di-unsaturated fatty acyl-[ACP] + malonyl-[ACP] + H(+) = a 3-oxo-ultra-long-chain di-unsaturated fatty acyl-[ACP] + holo-[ACP] + CO2. The protein operates within lipid metabolism; mycolic acid biosynthesis. Functionally, part of the mycobacterial fatty acid elongation system FAS-II, which is involved in mycolic acid biosynthesis. Catalyzes the elongation of long chain acyl-ACP substrates by the addition of two carbons from malonyl-ACP to an acyl acceptor. Involved in extension of the mycolate chains to full lengths and produces longer chain multiunsaturated hydrocarbons averaging 54 carbons in length. This is 3-oxoacyl-[acyl-carrier-protein] synthase 2 (kasB) from Mycobacterium leprae (strain TN).